A 218-amino-acid polypeptide reads, in one-letter code: DNA-directed RNA polymerase III subunit RPC7-like (218 aa).

The disordered stretch occupies residues threonine 130–tyrosine 218. Residues lysine 139 to glutamate 160 show a composition bias toward basic and acidic residues. 2 stretches are compositionally biased toward acidic residues: residues valine 161–aspartate 193 and asparagine 201–tyrosine 218.

The protein belongs to the eukaryotic RPC7 RNA polymerase subunit family. Component of the RNA polymerase III (Pol III) complex consisting of 17 subunits. Pol III exists as two alternative complexes defined by the mutually exclusive incorporation of subunit POLR3G/RPC7alpha or POLR3GL/RPC7beta. Found in a trimeric complex with POLR3C/RPC3 and POLR3F/RPC6. Directly interacts with POLR3C.

Its subcellular location is the nucleus. Its function is as follows. DNA-dependent RNA polymerase catalyzes the transcription of DNA into RNA using the four ribonucleoside triphosphates as substrates. Specific peripheric component of RNA polymerase III which synthesizes small RNAs, such as 5S rRNA and tRNAs. This chain is DNA-directed RNA polymerase III subunit RPC7-like (POLR3GL), found in Bos taurus (Bovine).